The sequence spans 42 residues: Photosystem I reaction center subunit IX (42 aa).

The chain crosses the membrane as a helical span at residues 7-27; that stretch reads YLSVAPVLSTLWFVSLAGLLI.

It belongs to the PsaJ family.

The protein localises to the plastid. Its subcellular location is the chloroplast thylakoid membrane. May help in the organization of the PsaE and PsaF subunits. The chain is Photosystem I reaction center subunit IX from Capsella bursa-pastoris (Shepherd's purse).